Reading from the N-terminus, the 430-residue chain is Zinc finger CCCH domain-containing protein 48 (430 aa).

Disordered regions lie at residues 1-27 and 56-90; these read MDLDMNGGNKRVFQRLGGGSNRPTTDS and GSGPVAASSNKRVADESGFAGPSHRRGPGFSGTAN. The C3H1-type 1 zinc-finger motif lies at 26 to 52; it reads DSNQKVCFHWRAGRCNRYPCPYLHREL. The C3H1-type 2 zinc-finger motif lies at 102-129; the sequence is TKTEKLCKFWVDGNCPYGDKCRYLHCWS. WD repeat units follow at residues 142 to 183, 221 to 258, 265 to 304, 306 to 342, 345 to 389, and 391 to 429; these read GHQK…GVLN, GPVGQVYSLVVGTDLLFAGTQDGSILVWRYNSTTSCFD, GHTLAVVSLYVGANRLYSGAMDNSIKVWSLDNLQCIQTLT, HTSVVMSLICWDQFLLSCSLDNTVKIWAATEGGNLEV, THKE…ERGK, and LAKQEIRSIQIGPGGIFFTGDGSGQVKVWKWSTESTPIL.

In Arabidopsis thaliana (Mouse-ear cress), this protein is Zinc finger CCCH domain-containing protein 48 (ZFWD1).